Reading from the N-terminus, the 501-residue chain is Pentatricopeptide repeat-containing protein At4g14190, chloroplastic (501 aa).

The transit peptide at 1 to 88 (MENLTTAQFL…SGSCPLRLLQ (88 aa)) directs the protein to the chloroplast. 5 PPR repeats span residues 130–160 (SENNYERIIRFLCEEKSMSEAIRAFRSMIDD), 166–200 (SLEIYNSIIHSYADDGKFEEAMFYLNHMKENGLLP), 201–235 (ITETYDGLIEAYGKWKMYDEIVLCLKRMESDGCVR), 236–270 (DHVTYNLLIREFSRGGLLKRMEQMYQSLMSRKMTL), and 271–305 (EPSTLLSMLEAYAEFGLIEKMEETCNKIIRFGISL).

It belongs to the PPR family. P subfamily.

The protein localises to the plastid. It is found in the chloroplast. This chain is Pentatricopeptide repeat-containing protein At4g14190, chloroplastic, found in Arabidopsis thaliana (Mouse-ear cress).